The sequence spans 344 residues: Thiamine thiazole synthase (344 aa).

Substrate contacts are provided by residues C90, E111–A112, G119, and V184. C232 carries the post-translational modification 2,3-didehydroalanine (Cys). Residues D234, H249, M301, and R311–G313 each bind substrate.

This sequence belongs to the THI4 family. As to quaternary structure, homooctamer. Interacts with cyp-41. Requires Fe cation as cofactor. During the catalytic reaction, a sulfide is transferred from Cys-232 to a reaction intermediate, generating a dehydroalanine residue.

It is found in the cytoplasm. The protein resides in the nucleus. The catalysed reaction is [ADP-thiazole synthase]-L-cysteine + glycine + NAD(+) = [ADP-thiazole synthase]-dehydroalanine + ADP-5-ethyl-4-methylthiazole-2-carboxylate + nicotinamide + 3 H2O + 2 H(+). In terms of biological role, involved in biosynthesis of the thiamine precursor thiazole. Catalyzes the conversion of NAD and glycine to adenosine diphosphate 5-(2-hydroxyethyl)-4-methylthiazole-2-carboxylic acid (ADT), an adenylated thiazole intermediate. The reaction includes an iron-dependent sulfide transfer from a conserved cysteine residue of the protein to a thiazole intermediate. The enzyme can only undergo a single turnover, which suggests it is a suicide enzyme. May have additional roles in adaptation to various stress conditions and in DNA damage tolerance. The protein is Thiamine thiazole synthase of Neurospora crassa (strain ATCC 24698 / 74-OR23-1A / CBS 708.71 / DSM 1257 / FGSC 987).